A 434-amino-acid polypeptide reads, in one-letter code: MSVFQGEVSSLPPDKSISHRAAIIGSLAEGTTEITNFSGGFDNQSTLSVLRDLGISVRQDEVPAGDGRIVRHVVIESNGLWSFREPSEPLMCNNSGSTMRMMAGILAAQPFRSELVGDASLMKRPMKRVADPLRMMGADISLSDAGTAPVVINGTKDLKTIEYLLPVPSAQVKSLVALAALHADGQSKIIEPIRSRDHTELMLGLETIDRPDGVREIIIDGRKPIAAKPFKVPADPSAACFMIALGLLGERSEIVLRDVCLNPTRVAYIDVLQEAGAGLGIENVRSEGGEPVGDIVVRSCSSLAPLRISDHAVVAGVIDELPMLAVLSAFATGEFELHNATELRTKESDRIEAVVSNLERLGFACEQYPDGFVVKGRPTVNREEAVIECFDDHRIAMSFAIAAEAAGASLRLSDREVAGVSFPNFFALIESLKQ.

Positions 15, 16, and 20 each coordinate 3-phosphoshikimate. Lysine 15 provides a ligand contact to phosphoenolpyruvate. Residues glycine 96 and arginine 124 each coordinate phosphoenolpyruvate. 3-phosphoshikimate is bound by residues serine 169, glutamine 171, serine 195, aspartate 319, and lysine 346. Glutamine 171 is a binding site for phosphoenolpyruvate. The active-site Proton acceptor is the aspartate 319. Positions 350 and 394 each coordinate phosphoenolpyruvate.

Belongs to the EPSP synthase family. In terms of assembly, monomer.

The protein localises to the cytoplasm. The catalysed reaction is 3-phosphoshikimate + phosphoenolpyruvate = 5-O-(1-carboxyvinyl)-3-phosphoshikimate + phosphate. The protein operates within metabolic intermediate biosynthesis; chorismate biosynthesis; chorismate from D-erythrose 4-phosphate and phosphoenolpyruvate: step 6/7. Catalyzes the transfer of the enolpyruvyl moiety of phosphoenolpyruvate (PEP) to the 5-hydroxyl of shikimate-3-phosphate (S3P) to produce enolpyruvyl shikimate-3-phosphate and inorganic phosphate. This Chlorobaculum parvum (strain DSM 263 / NCIMB 8327) (Chlorobium vibrioforme subsp. thiosulfatophilum) protein is 3-phosphoshikimate 1-carboxyvinyltransferase.